The primary structure comprises 84 residues: uncharacterized protein (84 aa).

This is an uncharacterized protein from Azorhizobium caulinodans (strain ATCC 43989 / DSM 5975 / JCM 20966 / LMG 6465 / NBRC 14845 / NCIMB 13405 / ORS 571).